Here is a 352-residue protein sequence, read N- to C-terminus: Dihydroorotate dehydrogenase (quinone) (352 aa).

FMN contacts are provided by residues 68–72 (AGFDK) and Thr-92. Substrate is bound at residue Lys-72. Residue 117 to 121 (NAMGF) participates in substrate binding. The FMN site is built by Asn-146 and Asn-179. Asn-179 lines the substrate pocket. Ser-182 serves as the catalytic Nucleophile. A substrate-binding site is contributed by Asn-184. FMN-binding residues include Lys-215 and Thr-243. 244 to 245 (NT) serves as a coordination point for substrate. Residues Gly-263, Gly-292, and 313-314 (YS) contribute to the FMN site.

This sequence belongs to the dihydroorotate dehydrogenase family. Type 2 subfamily. As to quaternary structure, monomer. FMN is required as a cofactor.

It is found in the cell membrane. It carries out the reaction (S)-dihydroorotate + a quinone = orotate + a quinol. Its pathway is pyrimidine metabolism; UMP biosynthesis via de novo pathway; orotate from (S)-dihydroorotate (quinone route): step 1/1. Its function is as follows. Catalyzes the conversion of dihydroorotate to orotate with quinone as electron acceptor. The protein is Dihydroorotate dehydrogenase (quinone) of Sulfurimonas denitrificans (strain ATCC 33889 / DSM 1251) (Thiomicrospira denitrificans (strain ATCC 33889 / DSM 1251)).